The chain runs to 295 residues: Cutinase 11 (295 aa).

The first 17 residues, 1–17, serve as a signal peptide directing secretion; that stretch reads MQTSALLLAAQALVASA. Cys-25 and Cys-102 are oxidised to a cystine. Residues Ser-113, Asp-198, and His-210 contribute to the active site. A disulfide bond links Cys-184 and Cys-202. Residues 228–258 are disordered; the sequence is KLNSGGSPPTTPPTTPPTTPPTTPPTTPPPS. Residues 236-258 are compositionally biased toward pro residues; the sequence is PTTPPTTPPTTPPTTPPTTPPPS. A CBM1 domain is found at 260–295; sequence SCAALYGQCGGQGWNGATCCSQGTCRASNQWYSQCL.

Belongs to the cutinase family. The 2 disulfide bonds play a critical role in holding the catalytic residues in juxta-position; reduction of the disulfide bridges results in the complete inactivation of the enzyme.

Its subcellular location is the secreted. It catalyses the reaction cutin + H2O = cutin monomers.. Its function is as follows. Catalyzes the hydrolysis of complex carboxylic polyesters found in the cell wall of plants. May degrade cutin, a macromolecule that forms the structure of the plant cuticle. May also degrade suberin, a specialized macromolecule found in the cell wall of various plant tissues. Allows pathogenic fungi to penetrate through the cuticular barrier into the host plant during the initial stage of fungal infection. Involved in pathogenesis. The polypeptide is Cutinase 11 (Verticillium dahliae (Verticillium wilt)).